Consider the following 465-residue polypeptide: Soluble pyridine nucleotide transhydrogenase (465 aa).

36–45 (ERYDNVGGGC) is an FAD binding site.

It belongs to the class-I pyridine nucleotide-disulfide oxidoreductase family. Requires FAD as cofactor.

It localises to the cytoplasm. It catalyses the reaction NAD(+) + NADPH = NADH + NADP(+). Conversion of NADPH, generated by peripheral catabolic pathways, to NADH, which can enter the respiratory chain for energy generation. The polypeptide is Soluble pyridine nucleotide transhydrogenase (Sodalis glossinidius (strain morsitans)).